Here is a 232-residue protein sequence, read N- to C-terminus: Putative dimethylsulfoniopropionate lyase DddL (232 aa).

The a divalent metal cation site is built by histidine 154, glutamate 159, tyrosine 161, and histidine 190.

Belongs to the non-heme iron-dependent dioxygenase family. In terms of assembly, homodimer. It depends on a divalent metal cation as a cofactor.

It catalyses the reaction S,S-dimethyl-beta-propiothetin = acrylate + dimethyl sulfide + H(+). May cleave dimethylsulfoniopropionate (DMSP), releasing dimethyl sulfide (DMS). DMS is the principal form by which sulfur is transported from oceans to the atmosphere. The real activity of the protein is however subject to debate and it is unclear whether it constitutes a real dimethylsulfoniopropionate lyase in vivo. In Cereibacter sphaeroides (strain ATCC 17023 / DSM 158 / JCM 6121 / CCUG 31486 / LMG 2827 / NBRC 12203 / NCIMB 8253 / ATH 2.4.1.) (Rhodobacter sphaeroides), this protein is Putative dimethylsulfoniopropionate lyase DddL (dddL).